A 346-amino-acid polypeptide reads, in one-letter code: tRNA N6-adenosine threonylcarbamoyltransferase (346 aa).

Residues histidine 110 and histidine 114 each contribute to the Fe cation site. Substrate-binding positions include 132–136 (LLSGG), aspartate 165, glycine 178, and asparagine 274. Residue aspartate 298 participates in Fe cation binding.

It belongs to the KAE1 / TsaD family. It depends on Fe(2+) as a cofactor.

It is found in the cytoplasm. The catalysed reaction is L-threonylcarbamoyladenylate + adenosine(37) in tRNA = N(6)-L-threonylcarbamoyladenosine(37) in tRNA + AMP + H(+). Its function is as follows. Required for the formation of a threonylcarbamoyl group on adenosine at position 37 (t(6)A37) in tRNAs that read codons beginning with adenine. Is involved in the transfer of the threonylcarbamoyl moiety of threonylcarbamoyl-AMP (TC-AMP) to the N6 group of A37, together with TsaE and TsaB. TsaD likely plays a direct catalytic role in this reaction. In Borreliella burgdorferi (strain ZS7) (Borrelia burgdorferi), this protein is tRNA N6-adenosine threonylcarbamoyltransferase.